The sequence spans 263 residues: 3'-5' ssDNA/RNA exonuclease TatD (263 aa).

3 residues coordinate a divalent metal cation: Glu-91, His-127, and His-152.

Belongs to the metallo-dependent hydrolases superfamily. TatD-type hydrolase family. TatD subfamily. Monomer. It depends on Mg(2+) as a cofactor.

It localises to the cytoplasm. In terms of biological role, 3'-5' exonuclease that prefers single-stranded DNA and RNA. May play a role in the H(2)O(2)-induced DNA damage repair. The chain is 3'-5' ssDNA/RNA exonuclease TatD from Citrobacter rodentium (strain ICC168) (Citrobacter freundii biotype 4280).